A 122-amino-acid polypeptide reads, in one-letter code: Small ribosomal subunit protein uS13 (122 aa).

The segment at 93–122 is disordered; it reads RRGLPVRGQKTKTNARTRKGPKKTMANKKK.

The protein belongs to the universal ribosomal protein uS13 family. As to quaternary structure, part of the 30S ribosomal subunit. Forms a loose heterodimer with protein S19. Forms two bridges to the 50S subunit in the 70S ribosome.

In terms of biological role, located at the top of the head of the 30S subunit, it contacts several helices of the 16S rRNA. In the 70S ribosome it contacts the 23S rRNA (bridge B1a) and protein L5 of the 50S subunit (bridge B1b), connecting the 2 subunits; these bridges are implicated in subunit movement. Contacts the tRNAs in the A and P-sites. This is Small ribosomal subunit protein uS13 from Clostridium botulinum (strain Alaska E43 / Type E3).